Reading from the N-terminus, the 199-residue chain is LIM domain-containing protein E (199 aa).

The LIM zinc-binding domain maps to 5–65 (VKCGACAKTA…PVHTPKVSAT (61 aa)). The segment at 134–199 (YAVFGADGQP…EEEQQYEEEQ (66 aa)) is disordered. Low complexity-rich tracts occupy residues 146-155 (EQQEQQQYTE) and 163-174 (EEQQYQEEQQQY). Over residues 175–199 (QEEEQQYQEEEQQYQEEEQQYEEEQ) the composition is skewed to acidic residues.

May interact with rac1A.

The protein localises to the cytoplasm. Its subcellular location is the cell cortex. It localises to the nucleus. It is found in the cell projection. The protein resides in the lamellipodium. The protein localises to the filopodium. Its subcellular location is the cytoskeleton. Functionally, associates with the actin cytoskeleton and may regulate actin polymerization in lamellipodia, through a rac1-dependent signaling pathway. May play a role in cell motility. Involved in cytokinesis by regulating the microtubule system and linking it to the cortical actin network. The sequence is that of LIM domain-containing protein E (limE) from Dictyostelium discoideum (Social amoeba).